We begin with the raw amino-acid sequence, 469 residues long: 3-isopropylmalate dehydratase large subunit (469 aa).

Residues C350, C410, and C413 each coordinate [4Fe-4S] cluster.

It belongs to the aconitase/IPM isomerase family. LeuC type 1 subfamily. In terms of assembly, heterodimer of LeuC and LeuD. Requires [4Fe-4S] cluster as cofactor.

The catalysed reaction is (2R,3S)-3-isopropylmalate = (2S)-2-isopropylmalate. Its pathway is amino-acid biosynthesis; L-leucine biosynthesis; L-leucine from 3-methyl-2-oxobutanoate: step 2/4. Its function is as follows. Catalyzes the isomerization between 2-isopropylmalate and 3-isopropylmalate, via the formation of 2-isopropylmaleate. The protein is 3-isopropylmalate dehydratase large subunit of Rhizobium etli (strain CIAT 652).